Reading from the N-terminus, the 210-residue chain is Large ribosomal subunit protein uL4 (210 aa).

Positions 44-54 are enriched in polar residues; that stretch reads QRQGTASTLTR. Residues 44-96 form a disordered region; the sequence is QRQGTASTLTRSEVRGGGRKPYKQKGTGRARQGSIRTPLRPGGGVIFGPKPRS. The segment covering 60-71 has biased composition (basic residues); the sequence is GGRKPYKQKGTG.

It belongs to the universal ribosomal protein uL4 family. Part of the 50S ribosomal subunit.

One of the primary rRNA binding proteins, this protein initially binds near the 5'-end of the 23S rRNA. It is important during the early stages of 50S assembly. It makes multiple contacts with different domains of the 23S rRNA in the assembled 50S subunit and ribosome. In terms of biological role, forms part of the polypeptide exit tunnel. The polypeptide is Large ribosomal subunit protein uL4 (Prochlorococcus marinus (strain MIT 9515)).